The primary structure comprises 540 residues: Phosphoenolpyruvate carboxykinase (ATP) (540 aa).

Arginine 65 lines the substrate pocket. N6-acetyllysine is present on lysine 87. Substrate is bound by residues tyrosine 207 and lysine 213. ATP is bound by residues lysine 213, histidine 232, and 248-256; that span reads GLSGTGKTT. Residues lysine 213 and histidine 232 each coordinate Mn(2+). Aspartate 269 contributes to the Mn(2+) binding site. ATP is bound by residues glutamate 297, arginine 333, 449-450, and threonine 455; that span reads RI. Arginine 333 contacts substrate. Position 523 is an N6-acetyllysine (lysine 523).

This sequence belongs to the phosphoenolpyruvate carboxykinase (ATP) family. Monomer. The cofactor is Mn(2+).

It is found in the cytoplasm. It carries out the reaction oxaloacetate + ATP = phosphoenolpyruvate + ADP + CO2. It participates in carbohydrate biosynthesis; gluconeogenesis. Functionally, involved in the gluconeogenesis. Catalyzes the conversion of oxaloacetate (OAA) to phosphoenolpyruvate (PEP) through direct phosphoryl transfer between the nucleoside triphosphate and OAA. The sequence is that of Phosphoenolpyruvate carboxykinase (ATP) from Escherichia coli O6:K15:H31 (strain 536 / UPEC).